The primary structure comprises 198 residues: Recombination protein RecR (198 aa).

The C4-type zinc-finger motif lies at 57–72 (CSVCGHITENDPCYIC). Residues 80–175 (SVICVVEDDK…KVTRLAQGLS (96 aa)) form the Toprim domain.

The protein belongs to the RecR family.

Functionally, may play a role in DNA repair. It seems to be involved in an RecBC-independent recombinational process of DNA repair. It may act with RecF and RecO. The protein is Recombination protein RecR of Staphylococcus haemolyticus (strain JCSC1435).